A 78-amino-acid chain; its full sequence is Large ribosomal subunit protein bL28 (78 aa).

The disordered stretch occupies residues 1 to 25; that stretch reads MSRVCQVTGKRPAVGNNRSHARNAT.

This sequence belongs to the bacterial ribosomal protein bL28 family.

This is Large ribosomal subunit protein bL28 from Vibrio vulnificus (strain CMCP6).